The sequence spans 102 residues: Large ribosomal subunit protein uL23c (102 aa).

Belongs to the universal ribosomal protein uL23 family. In terms of assembly, part of the 50S ribosomal subunit.

The protein localises to the plastid. The protein resides in the chloroplast. In terms of biological role, binds to 23S rRNA. The sequence is that of Large ribosomal subunit protein uL23c (rpl23) from Phaeodactylum tricornutum (strain CCAP 1055/1).